Reading from the N-terminus, the 272-residue chain is HMP-PP phosphatase (272 aa).

Aspartate 8 serves as the catalytic Nucleophile. Mg(2+) is bound by residues aspartate 8, aspartate 10, and aspartate 212.

This sequence belongs to the HAD-like hydrolase superfamily. Cof family. Requires Mg(2+) as cofactor.

It catalyses the reaction 4-amino-2-methyl-5-(diphosphooxymethyl)pyrimidine + H2O = 4-amino-2-methyl-5-(phosphooxymethyl)pyrimidine + phosphate + H(+). Functionally, catalyzes the hydrolysis of 4-amino-2-methyl-5-hydroxymethylpyrimidine pyrophosphate (HMP-PP) to 4-amino-2-methyl-5-hydroxymethylpyrimidine phosphate (HMP-P). The sequence is that of HMP-PP phosphatase from Salmonella schwarzengrund (strain CVM19633).